Here is a 180-residue protein sequence, read N- to C-terminus: MALRSRFWGLFSVCRNPGCRFAALSTSSEPAAKPEVDPVENEAVAPEFTNRNPRNLELLSVARKERGWRTVFPSREFWHRLRVIRTQHHVEALVEHQNGKVVVSASTREWAIKKHLYSTRNVVACESIGRVLAQRCLEAGINFMVYQPTPWEAASDSMKRLQSAMTEGGVVLREPQRIYE.

The protein belongs to the universal ribosomal protein uL18 family. In terms of assembly, component of the mitochondrial large ribosomal subunit (mt-LSU). Mature mammalian 55S mitochondrial ribosomes consist of a small (28S) and a large (39S) subunit. The 28S small subunit contains a 12S ribosomal RNA (12S mt-rRNA) and 30 different proteins. The 39S large subunit contains a 16S rRNA (16S mt-rRNA), a copy of mitochondrial valine transfer RNA (mt-tRNA(Val)), which plays an integral structural role, and 52 different proteins.

It localises to the mitochondrion. Its function is as follows. Together with thiosulfate sulfurtransferase (TST), acts as a mitochondrial import factor for the cytosolic 5S rRNA. The precursor form shows RNA chaperone activity; is able to fold the 5S rRNA into an import-competent conformation that is recognized by rhodanese (TST). Both the cytoplasmic and mitochondrial forms are able to bind to the helix IV-loop D in the gamma domain of the 5S rRNA. This Homo sapiens (Human) protein is Large ribosomal subunit protein uL18m (MRPL18).